Here is a 212-residue protein sequence, read N- to C-terminus: Penicillin-binding protein activator LpoB (212 aa).

A signal peptide spans 1 to 19 (MTKMHRYAAIAALAIFLSG). Cysteine 20 is lipidated: N-palmitoyl cysteine. Cysteine 20 is lipidated: S-diacylglycerol cysteine. Residues 28 to 73 (PVEEVKPAPEQPAQPPQPPVVPSVPTIPQQPGPIEHEDQTGQPAPK) are disordered. Positions 36 to 49 (PEQPAQPPQPPVVP) are enriched in pro residues.

Belongs to the LpoB family. In terms of assembly, interacts with PBP1b.

It is found in the cell outer membrane. Functionally, regulator of peptidoglycan synthesis that is essential for the function of penicillin-binding protein 1B (PBP1b). The protein is Penicillin-binding protein activator LpoB of Salmonella typhimurium (strain LT2 / SGSC1412 / ATCC 700720).